The primary structure comprises 246 residues: Ribosomal RNA small subunit methyltransferase J (246 aa).

Residues 115-116 (ER) and D169 contribute to the S-adenosyl-L-methionine site.

The protein belongs to the methyltransferase superfamily. RsmJ family.

The protein localises to the cytoplasm. It carries out the reaction guanosine(1516) in 16S rRNA + S-adenosyl-L-methionine = N(2)-methylguanosine(1516) in 16S rRNA + S-adenosyl-L-homocysteine + H(+). In terms of biological role, specifically methylates the guanosine in position 1516 of 16S rRNA. The sequence is that of Ribosomal RNA small subunit methyltransferase J from Buchnera aphidicola subsp. Acyrthosiphon pisum (strain APS) (Acyrthosiphon pisum symbiotic bacterium).